A 248-amino-acid chain; its full sequence is 14-3-3 protein (248 aa).

Coiled-coil stretches lie at residues 13 to 33 (MAQL…MRKI) and 91 to 111 (RQKI…LLQE). Residue 135–136 (RY) participates in O-phospho-L-serine binding. A Phosphothreonine modification is found at Thr-214. The Putative polyglycylation target motif (T/G)X0-1(D/E)X1-3-G(D/E)X1-2(gE)2-4, where X is polar or negatively charged amino acid, and gE is polyglycylated glutamine motif lies at 237 to 248 (TDSAGDDNAEEK). Glu-246 is subject to 5-glutamyl polyglycine.

It belongs to the 14-3-3 family. Homodimer. Homodimerizes via N-terminal domains. Oligomerizes forming homotrimers, homotetramers and protein filaments. Oligomerization is hindered by polyglycylation in vivo. Interacts with a large number of both cytosolic and membrane proteins in trophozoites and encysting parasites. Interacts with a serine/threonine protein kinase GL50803_112076 (gCDC7). Component of a multiprotein complex containing gCDC7 and GL50803_94117 (gDBF4), a regulatory subunit of gCDC7, during both the trophozoite and encysting stages of the parasite. Interacts with fructose-bisphosphate aldolase GL50803_11043 (gFBA), pyruvate kinase GL50803_17143 (gPyk), acetyl-CoA synthetase GL50803_13608 (gACS), protein kinase GL50803_22165 (gSTE), DEAD box RNA helicase GL50803_34684 (gVASA) and Golgi/cell cycle associated protein GL50803_17472 (gGCCA). Interacts with actin. Interacts with both monomeric phosphorylated and unphosphorylated actin. The interaction is enhanced by phosphorylation of actin and inhibited by Rho GTPase Rac. Phosphorylated constitutively throughout the life cycle. Phosphorylation is very high in trophozoites and encysting cells of 12 hours. Phosphorylated during excystation. Phosphorylation promotes its binding to various target proteins and is critical for encystation process. Phosphorylation modification is not influenced by polyglycylation modification. Post-translationally, polyglycylated on a glutamate residue, resulting in polyglycine chain on the gamma-carboxyl group. Polyglycylated by the tubulin--tyrosine ligase-like protein GL50803_8456 (gTTLL3). The polyglycine chain is shortened by metallopeptidases of the M20 family, namely dipeptidases GL50803_15832 (gDIP1) and GL50803_8407 (gDIP2). The length of the polyglycine chain is developmental stage-dependent. In trophozoites, glycine residues range from 10 to 31, with the greatest occurrence of 21 residues. In 12 hour encystation stage, glycine residues range from 6 to 22, with the greatest occurrence of 10 residues. The differential rate of polyglycylation/deglycylation during the encystation process regulates the intracellular localization of this protein. Relocalizes partially from the cytoplasm inside the nuclei following the shortening of the polyglycine chain in encysting cells. Polyglycylation modification is not influenced by phosphorylation modification. Polyglycylation prevents oligomerization in vivo.

It localises to the cytoplasm. The protein localises to the cytoskeleton. Its subcellular location is the nucleus. It is found in the cell projection. The protein resides in the cilium. It localises to the flagellum. The protein localises to the spindle. Its subcellular location is the nucleus envelope. It is found in the endoplasmic reticulum. Adapter protein implicated in the regulation of a large spectrum of both general and specialized signaling pathways. Binds to a large number of partners, usually by recognition of a phosphoserine or phosphothreonine motif. Binding generally results in the modulation of the activity of the binding partner. Binds with varying affinity to various synthetic phosphopeptides having a consensus binding motif RSX(pS/pT)XP, called mode-1, where X is any residue and pS/pT is a phosphorylated serine/threonine, and to synthetic phosphopeptides having a consensus binding motif Xp(S/T)X1-2-COOH, called mode-3, in which the phosphorylated residue occupies the penultimate C-terminal position in the target protein, but does not bind to their unphosphorylated counterparts. Binds to synthetic human RAF1 phosphopeptides, but not to their unphosphorylated forms. Binds to difopein, a polypeptide containing a phosphorylation-independent binding motif. Involved in encystation. Involved in cell proliferation. Required for actin and tubulin cytoskeletal organization. Regulates actin filament formation and nuclear size. This Giardia intestinalis (strain ATCC 50803 / WB clone C6) (Giardia lamblia) protein is 14-3-3 protein.